The chain runs to 187 residues: Ribonuclease HII (187 aa).

One can recognise an RNase H type-2 domain in the interval 1 to 187; the sequence is MICGTDEAGR…NPVKRLLANL (187 aa). A divalent metal cation is bound by residues Asp-6, Glu-7, and Asp-98.

This sequence belongs to the RNase HII family. The cofactor is Mn(2+). Mg(2+) serves as cofactor.

Its subcellular location is the cytoplasm. The catalysed reaction is Endonucleolytic cleavage to 5'-phosphomonoester.. Functionally, endonuclease that specifically degrades the RNA of RNA-DNA hybrids. The protein is Ribonuclease HII of Idiomarina loihiensis (strain ATCC BAA-735 / DSM 15497 / L2-TR).